The following is a 475-amino-acid chain: MVKTNINKGYVNQIIGPVLDIEFPSGTLPPIYSALKIETEDGIGTVVEVQQLLGDNKVRAVSMRSTDGLKRGVEARDLGGPISVPVGISTLGRIFNVIGEPVDEQGDVSYDETLPIHREAPAFTELETKPSIFETGIKVVDLLAPYRRGGKIGLFGGAGVGKTVLIMELINNIAKAHGGVSVFGGVGERTREGNDLYEEMKESGVINENNFKESKVALVYGQMNEPPGARMRVGLTALTMAEYFRDVNKQDVLLFIDNIFRFTQAGSEVSALLGRMPSAVGYQPTLATEMGALQERITSTTQGSITSIQAVYVPADDLTDPAPATTFAHLDATTVLSRNLAAKGIYPAVDPLDSTSTMLQPGIVSGEHYEIAETVKETLQRYKELQDIIAILGIDELSEEDRLTVARARKVERFLSQPFFVAEIFTGSPGKYVSLEETIKGFTMVLKGELDELPEQAFYLVGNIDEAIAKAETLK.

156–163 (GGAGVGKT) is a binding site for ATP.

The protein belongs to the ATPase alpha/beta chains family. F-type ATPases have 2 components, CF(1) - the catalytic core - and CF(0) - the membrane proton channel. CF(1) has five subunits: alpha(3), beta(3), gamma(1), delta(1), epsilon(1). CF(0) has four main subunits: a(1), b(1), b'(1) and c(9-12).

It is found in the plastid. It localises to the chloroplast thylakoid membrane. The catalysed reaction is ATP + H2O + 4 H(+)(in) = ADP + phosphate + 5 H(+)(out). Produces ATP from ADP in the presence of a proton gradient across the membrane. The catalytic sites are hosted primarily by the beta subunits. This chain is ATP synthase subunit beta, chloroplastic, found in Trieres chinensis (Marine centric diatom).